The following is a 488-amino-acid chain: Germacrene A acid 8-beta-hydroxylase (488 aa).

A helical; Signal-anchor for type II membrane protein transmembrane segment spans residues 2–22 (ELFTIFSIVVSSLILFTFWSL). Asn-407 carries N-linked (GlcNAc...) asparagine glycosylation. Position 429 (Cys-429) interacts with heme.

Belongs to the cytochrome P450 family. It depends on heme as a cofactor. Expressed in leaf primordia.

The protein localises to the membrane. The catalysed reaction is germacra-1(10),4,11(13)-trien-12-oate + reduced [NADPH--hemoprotein reductase] + O2 = 8beta-hydroxygermacra-1(10),4,11(13)-trien-12-oate + oxidized [NADPH--hemoprotein reductase] + H2O + H(+). Its pathway is secondary metabolite biosynthesis; terpenoid biosynthesis. Involved in the biosynthesis of germacrene-derived sesquiterpene lactones. Hydroxylates germacrene A acid to 8-beta-hydroxy-germacrene A acid. Unlike 6-alpha-hydroxy-germacrene A acid, this compound cannot undergo spontaneous lactonization. The chain is Germacrene A acid 8-beta-hydroxylase from Helianthus annuus (Common sunflower).